The sequence spans 134 residues: Photosystem II assembly factor lipoprotein Psb27 (134 aa).

The N-terminal stretch at 1–21 (MKRFWAMVCALFLSVSLLLTS) is a signal peptide. Cysteine 22 is lipidated: N-palmitoyl cysteine. Cysteine 22 is lipidated: S-diacylglycerol cysteine.

Belongs to the Psb27 family. As to quaternary structure, part of a photosystem II (PSII) assembly intermediate complex PSII-I; crystallized from a strain deleted of psbJ, it forms monomeric PSII before addition of the oxygen evolving complex. PSII-I includes 3 assembly factors not found in mature PSII (Psb27, Psb28 and Psb34). Binds to the lumenal side of PSII, adjacent to the CP43 (psbC) subunit.

The protein localises to the cellular thylakoid membrane. Its function is as follows. Plays a role in the repair and/or biogenesis of the calcium-manganese-oxide cluster on the lumenal face of the thylakoid membrane. Its presence in a photosystem II (PSII) preparation prevents binding of other extrinsic subunits PsbO, PsbU and PsbV, and thus assembly of calcium-manganese-oxide cluster. Psb27-containing complexes lack oxygen evolving activity and an oxidizable calcium-manganese-oxide cluster, but have a normal reaction center. This chain is Photosystem II assembly factor lipoprotein Psb27, found in Thermosynechococcus vestitus (strain NIES-2133 / IAM M-273 / BP-1).